Consider the following 349-residue polypeptide: AA9 family lytic polysaccharide monooxygenase A (349 aa).

Positions 1-19 are cleaved as a signal peptide; the sequence is MKSTFGLLALAAAAKLVSA. Residues histidine 20 and histidine 102 each coordinate Cu(2+). Cysteine 62 and cysteine 183 are joined by a disulfide. Position 169 (histidine 169) interacts with O2. Residue tyrosine 180 participates in Cu(2+) binding. A disordered region spans residues 233 to 304; sequence DGSSSGSSGS…SGSNSGSDSC (72 aa). 2 stretches are compositionally biased toward low complexity: residues 234–262 and 269–304; these read GSSS…AVPT and TSAT…SDSC. Residues 311-347 form the CBM1 domain; that stretch reads GSVKIYGQCGGQNYSGPTSCEAGLICKEWNPYYHQCV. An N-linked (GlcNAc...) asparagine glycan is attached at asparagine 323.

Belongs to the polysaccharide monooxygenase AA9 family. Requires Cu(2+) as cofactor.

Its subcellular location is the secreted. It catalyses the reaction [(1-&gt;4)-beta-D-glucosyl]n+m + reduced acceptor + O2 = 4-dehydro-beta-D-glucosyl-[(1-&gt;4)-beta-D-glucosyl]n-1 + [(1-&gt;4)-beta-D-glucosyl]m + acceptor + H2O.. In terms of biological role, lytic polysaccharide monooxygenase (LPMO) that depolymerizes crystalline and amorphous polysaccharides via the oxidation of scissile alpha- or beta-(1-4)-glycosidic bonds, yielding C4 oxidation products. Catalysis by LPMOs requires the reduction of the active-site copper from Cu(II) to Cu(I) by a reducing agent and H(2)O(2) or O(2) as a cosubstrate. This Aspergillus fumigatus (strain CBS 144.89 / FGSC A1163 / CEA10) (Neosartorya fumigata) protein is AA9 family lytic polysaccharide monooxygenase A (eglD).